The chain runs to 303 residues: Methionyl-tRNA formyltransferase (303 aa).

108–111 (SDLP) lines the (6S)-5,6,7,8-tetrahydrofolate pocket.

Belongs to the Fmt family.

It carries out the reaction L-methionyl-tRNA(fMet) + (6R)-10-formyltetrahydrofolate = N-formyl-L-methionyl-tRNA(fMet) + (6S)-5,6,7,8-tetrahydrofolate + H(+). In terms of biological role, attaches a formyl group to the free amino group of methionyl-tRNA(fMet). The formyl group appears to play a dual role in the initiator identity of N-formylmethionyl-tRNA by promoting its recognition by IF2 and preventing the misappropriation of this tRNA by the elongation apparatus. This is Methionyl-tRNA formyltransferase from Rickettsia rickettsii (strain Iowa).